Here is a 313-residue protein sequence, read N- to C-terminus: Putative S-adenosyl-L-methionine-dependent methyltransferase MAV_4573 (313 aa).

S-adenosyl-L-methionine contacts are provided by residues Asp-129 and 158–159 (DL).

Belongs to the UPF0677 family.

In terms of biological role, exhibits S-adenosyl-L-methionine-dependent methyltransferase activity. The sequence is that of Putative S-adenosyl-L-methionine-dependent methyltransferase MAV_4573 from Mycobacterium avium (strain 104).